The primary structure comprises 53 residues: Bowman-Birk type proteinase inhibitor 1 (53 aa).

5 disulfide bridges follow: Cys9-Cys24, Cys12-Cys51, Cys14-Cys22, Cys31-Cys38, and Cys40-Cys48.

As to quaternary structure, dimer.

Its function is as follows. Inhibits trypsin (IC(50)=6.20 nM), neutrophil elastase (ELANE) and, to a lesser extent, alpha-chymotrypsin (IC(50)=3.44 uM). This chain is Bowman-Birk type proteinase inhibitor 1, found in Lathyrus sativus (White vetchling).